We begin with the raw amino-acid sequence, 67 residues long: ATP synthase protein 8 (67 aa).

A helical transmembrane segment spans residues 8–24 (TWFITITSMTITLFIMF). An N6-acetyllysine; alternate modification is found at lysine 54. At lysine 54 the chain carries N6-succinyllysine; alternate. The residue at position 57 (lysine 57) is an N6-acetyllysine.

This sequence belongs to the ATPase protein 8 family. F-type ATPases have 2 components, CF(1) - the catalytic core - and CF(0) - the membrane proton channel. Component of an ATP synthase complex composed of ATP5PB, ATP5MC1, ATP5F1E, ATP5PD, ATP5ME, ATP5PF, ATP5MF, MT-ATP6, MT-ATP8, ATP5F1A, ATP5F1B, ATP5F1D, ATP5F1C, ATP5PO, ATP5MG, ATP5MK and ATP5MJ. Interacts with PRICKLE3.

The protein localises to the mitochondrion membrane. Functionally, mitochondrial membrane ATP synthase (F(1)F(0) ATP synthase or Complex V) produces ATP from ADP in the presence of a proton gradient across the membrane which is generated by electron transport complexes of the respiratory chain. F-type ATPases consist of two structural domains, F(1) - containing the extramembraneous catalytic core and F(0) - containing the membrane proton channel, linked together by a central stalk and a peripheral stalk. During catalysis, ATP synthesis in the catalytic domain of F(1) is coupled via a rotary mechanism of the central stalk subunits to proton translocation. Part of the complex F(0) domain. Minor subunit located with subunit a in the membrane. The sequence is that of ATP synthase protein 8 (MT-ATP8) from Rhinoceros unicornis (Greater Indian rhinoceros).